Here is a 90-residue protein sequence, read N- to C-terminus: Barrier-to-autointegration factor (90 aa).

A phosphoserine mark is found at Ser-2 and Ser-3. The residue at position 4 (Thr-4) is a Phosphothreonine. A Phosphoserine modification is found at Ser-5.

This sequence belongs to the BAF family. In terms of assembly, homodimer.

Its subcellular location is the nucleus. The protein resides in the chromosome. The protein localises to the nucleus envelope. It localises to the cytoplasm. Non-specific DNA-binding protein that plays key roles in mitotic nuclear reassembly, chromatin organization, DNA damage response, gene expression and intrinsic immunity against foreign DNA. Contains two non-specific double-stranded DNA (dsDNA)-binding sites which promote DNA cross-bridging. Plays a key role in nuclear membrane reformation at the end of mitosis by driving formation of a single nucleus in a spindle-independent manner. Transiently cross-bridges anaphase chromosomes via its ability to bridge distant DNA sites, leading to the formation of a dense chromatin network at the chromosome ensemble surface that limits membranes to the surface. Also acts as a negative regulator of innate immune activation by restricting CGAS activity toward self-DNA upon acute loss of nuclear membrane integrity. Outcompetes CGAS for DNA-binding, thereby preventing CGAS activation and subsequent damaging autoinflammatory responses. Also involved in DNA damage response; acts by inhibiting the ADP-ribosyltransferase activity of PARP1. Involved in the recognition of exogenous dsDNA in the cytosol: associates with exogenous dsDNA immediately after its appearance in the cytosol at endosome breakdown and is required to avoid autophagy. This Danio rerio (Zebrafish) protein is Barrier-to-autointegration factor (banf1).